A 244-amino-acid chain; its full sequence is Protein-L-isoaspartate O-methyltransferase (244 aa).

A disordered region spans residues 1–39 (MINPFSSFRWRHSSRSPAGIPEVEPQPPDASDPFASQRE). Ser-92 is a catalytic residue.

The protein belongs to the methyltransferase superfamily. L-isoaspartyl/D-aspartyl protein methyltransferase family.

It localises to the cytoplasm. The enzyme catalyses [protein]-L-isoaspartate + S-adenosyl-L-methionine = [protein]-L-isoaspartate alpha-methyl ester + S-adenosyl-L-homocysteine. Functionally, catalyzes the methyl esterification of L-isoaspartyl residues in peptides and proteins that result from spontaneous decomposition of normal L-aspartyl and L-asparaginyl residues. It plays a role in the repair and/or degradation of damaged proteins. This Synechococcus sp. (strain JA-2-3B'a(2-13)) (Cyanobacteria bacterium Yellowstone B-Prime) protein is Protein-L-isoaspartate O-methyltransferase.